We begin with the raw amino-acid sequence, 800 residues long: Putative antiporter subunit mnhA2 (800 aa).

20 consecutive transmembrane segments (helical) span residues 1-21 (MSLV…LLMS), 33-53 (IALV…PSVA), 78-98 (GLSL…FFYA), 118-138 (LFMF…MYIF), 167-187 (FMIT…LYIM), 207-227 (GLFI…SAQF), 241-261 (TPVS…FLLL), 273-293 (YIYI…ITAL), 300-320 (GILA…VGIG), 331-351 (IASI…NHAI), 387-407 (LVMT…GFLS), 424-444 (FSLI…IFTF), 472-492 (PWLF…IFFV), 527-547 (GFNI…VLAI), 595-615 (IIMT…RIGL), 627-647 (GALE…LIFI), 651-671 (LTMV…FIAM), 676-696 (LALT…VSFS), 712-732 (IIKI…IFIT), and 768-788 (LDTL…YTLL).

Belongs to the CPA3 antiporters (TC 2.A.63) subunit A family. In terms of assembly, may form a heterooligomeric complex that consists of seven subunits: mnhA2, mnhB2, mnhC2, mnhD2, mnhE2, mnhF2 and mnhG2.

The protein resides in the cell membrane. The sequence is that of Putative antiporter subunit mnhA2 (mnhA2) from Staphylococcus aureus (strain Mu3 / ATCC 700698).